We begin with the raw amino-acid sequence, 426 residues long: MGQFRFLALIVAVLCFSVALFLPTADEPDQDSYSVPLNQSVNTSQPPSSEMVPSDIRLTPLPQPKRIHYMVKVGDTLSGIFAQLGVPYSILQKILSVDLDHLQLDMIQPGEELELMMDDMGQLSRLIYHMSIVEKAIYTRENDGSFSYDFQEISGEWREILFSGEINGSFSVSARRVGLTSSQVANITQVMKDKIDFSRSLRAGDRFDILVKQQYLGEHNTGNSEIKAISFKLAKGDVSAFLAEDGRFYDRAGNSLERAFNRYPVDKAYRQITSGFNPKRKHPVTGRVVPHNGTDFATPIGAPVYSTGDGKVIVVRKHPYAGNYLVIEHNSVYKTRYLHLDKILVKKGQLVKRGQKIALAGATGRLTGPHLHFEVLVRNRPVDAMKADLPIAKSLSSNQKTSFLARVSEFDHLVQANQQEVALDET.

An N-terminal signal peptide occupies residues 1 to 21; the sequence is MGQFRFLALIVAVLCFSVALF. Positions 32-48 are enriched in polar residues; the sequence is SYSVPLNQSVNTSQPPS. The interval 32–55 is disordered; that stretch reads SYSVPLNQSVNTSQPPSSEMVPSD. Histidine 291, aspartate 295, and histidine 372 together coordinate Zn(2+).

Belongs to the peptidase M23B family. As to quaternary structure, monomer. Zn(2+) serves as cofactor.

The protein resides in the periplasm. It participates in cell wall degradation; peptidoglycan degradation. Its activity is regulated as follows. Not inhibited by metal chelator EDTA. Its function is as follows. Cell wall peptidoglycan (PG) DD-endopeptidase, which may act as a substitute for other zinc-dependent PG endopeptidases (ShyA and ShyC) during zinc starvation. Hydrolyzes peptide cross-links which covalently connect adjacent PG strands probably to allow insertion of new glycans and thus cell wall expansion. Degrades purified whole PG sacculi in vitro. It is unclear how it is able to function in low zinc environments, but that may possibly be due to binding zinc with very high affinity, utilizing an alternative metal cofactor or that it may function independently of a bound metal cofactor. The chain is Peptidoglycan DD-endopeptidase ShyB from Vibrio cholerae serotype O1 (strain ATCC 39315 / El Tor Inaba N16961).